Consider the following 390-residue polypeptide: NADH-quinone oxidoreductase subunit D (390 aa).

Belongs to the complex I 49 kDa subunit family. In terms of assembly, NDH-1 is composed of 14 different subunits. Subunits NuoB, C, D, E, F, and G constitute the peripheral sector of the complex.

Its subcellular location is the cell inner membrane. It catalyses the reaction a quinone + NADH + 5 H(+)(in) = a quinol + NAD(+) + 4 H(+)(out). Its function is as follows. NDH-1 shuttles electrons from NADH, via FMN and iron-sulfur (Fe-S) centers, to quinones in the respiratory chain. The immediate electron acceptor for the enzyme in this species is believed to be ubiquinone. Couples the redox reaction to proton translocation (for every two electrons transferred, four hydrogen ions are translocated across the cytoplasmic membrane), and thus conserves the redox energy in a proton gradient. In Geobacter sulfurreducens (strain ATCC 51573 / DSM 12127 / PCA), this protein is NADH-quinone oxidoreductase subunit D.